Here is a 377-residue protein sequence, read N- to C-terminus: Lipoyl synthase, mitochondrial (377 aa).

A mitochondrion-targeting transit peptide spans 1-77 (MFRRGGRILN…LPNGSVHKRL (77 aa)). [4Fe-4S] cluster contacts are provided by cysteine 107, cysteine 112, cysteine 118, cysteine 138, cysteine 142, cysteine 145, and serine 353. Positions 123 to 342 (DKTRATATIM…RKRAEELGFL (220 aa)) constitute a Radical SAM core domain.

This sequence belongs to the radical SAM superfamily. Lipoyl synthase family. The cofactor is [4Fe-4S] cluster.

The protein resides in the mitochondrion. The enzyme catalyses [[Fe-S] cluster scaffold protein carrying a second [4Fe-4S](2+) cluster] + N(6)-octanoyl-L-lysyl-[protein] + 2 oxidized [2Fe-2S]-[ferredoxin] + 2 S-adenosyl-L-methionine + 4 H(+) = [[Fe-S] cluster scaffold protein] + N(6)-[(R)-dihydrolipoyl]-L-lysyl-[protein] + 4 Fe(3+) + 2 hydrogen sulfide + 2 5'-deoxyadenosine + 2 L-methionine + 2 reduced [2Fe-2S]-[ferredoxin]. The protein operates within protein modification; protein lipoylation via endogenous pathway; protein N(6)-(lipoyl)lysine from octanoyl-[acyl-carrier-protein]: step 2/2. Catalyzes the radical-mediated insertion of two sulfur atoms into the C-6 and C-8 positions of the octanoyl moiety bound to the lipoyl domains of lipoate-dependent enzymes, thereby converting the octanoylated domains into lipoylated derivatives. This is Lipoyl synthase, mitochondrial from Schizosaccharomyces japonicus (strain yFS275 / FY16936) (Fission yeast).